The following is a 316-amino-acid chain: Retinol dehydrogenase 7 (316 aa).

Residue 33–57 participates in NADP(+) binding; it reads FITGCDSGFGNLLARQLDRRGMRVL. Substrate is bound at residue Ser163. Tyr175 acts as the Proton acceptor in catalysis.

The protein belongs to the short-chain dehydrogenases/reductases (SDR) family. In terms of tissue distribution, highly expressed in liver. Also expressed in lung, eye, kidney, and brain.

Its subcellular location is the microsome. It localises to the endoplasmic reticulum. It carries out the reaction all-trans-retinol--[retinol-binding protein] + NAD(+) = all-trans-retinal--[retinol-binding protein] + NADH + H(+). The protein operates within cofactor metabolism; retinol metabolism. Acts on androgens and retinols, i.e. has steroid 3-alpha- and 17-beta-dehydrogenase and cis/trans-retinol catalytic activities. This chain is Retinol dehydrogenase 7 (Rdh7), found in Mus musculus (Mouse).